The primary structure comprises 133 residues: Large ribosomal subunit protein bL17 (133 aa).

It belongs to the bacterial ribosomal protein bL17 family. Part of the 50S ribosomal subunit. Contacts protein L32.

This is Large ribosomal subunit protein bL17 from Polaromonas naphthalenivorans (strain CJ2).